An 850-amino-acid chain; its full sequence is MSIAPAAHTPMMQQYLGIKAQHPDMLLFYRMGDFYELFFEDAEKAARLLNITLTTRGASAGSPIKMAGVPYHSAEQYLARLLKLGESVVIAEQVGDPAASKGPVERRVSRVVTPGTLTDAGLLDETRDALIMAIAVAGDVLGVAWLNLAAGRFQVTELDRTALPALLARVRPAEILAHEHLDLAADCPVRRLDAWQFDADGASKRLARQFGSCDLQGFGVAEMHCAIAAAGALLGYIETTQRTALPHLLSIRAERDSDFVLLDAATRRNLELTETLRGDAAPTLRSVLDTTCSGMGTRLLRHWLHHPLRDRAAVAARRDAIGVLAAAPDSAARLADLLKRCADVERIGGRIALKNARPRDLSGLRDTLALLPELAAALPTDGARLAALRDAVAATPDVHALLVRAIQPEPASVLREGGVIADGYDAELDELRALTRDAGAFLLELETRERARSGIATLKVEYNKVHGFYIEVGRAQAERVPDDYRRRQTLKNVERYLTPELKAFEDKALSAQERALAREKALFEALLDTLIPHVPNLLSIASALAEIDVLASQAERASTLRLCAPEFSDDPCIVIRGGRHPVVEAQVEHFIPNDVVLNRTRQMLLITGPNMGGKSTYMRQVALITLMACCGLWVPAASARIGAIDQIFTRIGASDDLAGGRSTFMVEMTETANILHSATADSLVLLDEIGRGTSTFDGLALAWAVARHLVSATRAFTLFATHYFELTQLAQEYRQLANVHLDAKEHGADLVFLHAVEDGPASQSYGIQVARLAGVPGPVIHAARRRLRELEDAQLQPGPQGDLFAAHLPRDEAPPHPALDQLRELDPDTLTPKAALDMLYALKALTDSEP.

608–615 (GPNMGGKS) is a binding site for ATP.

It belongs to the DNA mismatch repair MutS family.

Its function is as follows. This protein is involved in the repair of mismatches in DNA. It is possible that it carries out the mismatch recognition step. This protein has a weak ATPase activity. In Thiobacillus denitrificans (strain ATCC 25259 / T1), this protein is DNA mismatch repair protein MutS.